A 402-amino-acid polypeptide reads, in one-letter code: D-galactonate dehydratase family member EGBG_02030 (402 aa).

D207 lines the Mg(2+) pocket. A D-arabinonate-binding site is contributed by H209. Mg(2+) contacts are provided by E233 and E259. The D-arabinonate site is built by E259, R280, H309, and E336.

The protein belongs to the mandelate racemase/muconate lactonizing enzyme family. GalD subfamily.

Functionally, has no detectable activity with D-mannonate and with a panel of 70 other acid sugars (in vitro), in spite of the conservation of the residues that are expected to be important for catalytic activity and cofactor binding. May have evolved a divergent function. This chain is D-galactonate dehydratase family member EGBG_02030, found in Enterococcus gallinarum (strain EG2).